We begin with the raw amino-acid sequence, 288 residues long: HTH-type transcriptional regulator CzcR (288 aa).

The HTH lysR-type domain maps to 1 to 58 (MELRDLQIFQSVADQGSVSSAAKELNYVQSNVTARIKQLENELKTPLFYRHKRGMTLT). A DNA-binding region (H-T-H motif) is located at residues 18–37 (VSSAAKELNYVQSNVTARIK).

The protein belongs to the LysR transcriptional regulatory family.

The protein is HTH-type transcriptional regulator CzcR (czcR) of Bacillus cereus (strain ATCC 10987 / NRS 248).